Reading from the N-terminus, the 1786-residue chain is uncharacterized protein (1786 aa).

3 disordered regions span residues 140-191, 203-329, and 400-480; these read QGLR…LPEA, RRES…RGGV, and GGSD…TPPE. The segment covering 149 to 158 has biased composition (polar residues); that stretch reads SDMNSQTSLT. Residues 232 to 247 are compositionally biased toward low complexity; that stretch reads GHAPEAPAPGESPASS. Positions 248–259 are enriched in polar residues; sequence QCLPSQACENDF. Residues 306-329 show a composition bias toward basic and acidic residues; it reads TSCRQHREEAGDRAGAGEDKRGGV. The span at 422-438 shows a compositional bias: low complexity; that stretch reads STTPSTNTTRTPSPISS. A compositionally biased stretch (pro residues) spans 467 to 480; the sequence is VPPPTGPGTATPPE. Thr721 carries the phosphothreonine modification. Disordered regions lie at residues 746-907, 1081-1180, 1218-1242, 1291-1348, 1362-1460, and 1477-1550; these read SESK…SDGH, VRDV…NSSP, ASAQ…PKPA, KEGV…VSAR, SLYI…NSDC, and LLGR…EHTP. 2 stretches are compositionally biased toward basic and acidic residues: residues 810 to 828 and 845 to 861; these read MQRE…DTSH and KPWE…HSEA. The segment covering 1105-1115 has biased composition (low complexity); it reads KGSGDSSDKGS. Over residues 1131–1140 the composition is skewed to polar residues; the sequence is TPASGGSRSL. The segment covering 1153 to 1164 has biased composition (basic and acidic residues); the sequence is PREEGVDREPRE. The span at 1167-1180 shows a compositional bias: polar residues; the sequence is SQVSNGGRLLNSSP. Ser1179 carries the phosphoserine modification. Composition is skewed to basic and acidic residues over residues 1223–1238 and 1301–1319; these read TPEK…EGKA and DPDK…DTGH. Polar residues-rich tracts occupy residues 1336–1345, 1389–1401, and 1504–1521; these read RNSNPSTESV, NVFT…TQKT, and ARSQ…SGTS. Arg1767 is modified (omega-N-methylarginine).

This is an uncharacterized protein from Mus musculus (Mouse).